A 222-amino-acid polypeptide reads, in one-letter code: UPF0502 protein XAC4278 (222 aa).

The protein belongs to the UPF0502 family.

The chain is UPF0502 protein XAC4278 from Xanthomonas axonopodis pv. citri (strain 306).